The chain runs to 122 residues: Holo-[acyl-carrier-protein] synthase (122 aa).

Mg(2+) contacts are provided by Asp-9 and Glu-58.

This sequence belongs to the P-Pant transferase superfamily. AcpS family. The cofactor is Mg(2+).

The protein resides in the cytoplasm. It catalyses the reaction apo-[ACP] + CoA = holo-[ACP] + adenosine 3',5'-bisphosphate + H(+). Functionally, transfers the 4'-phosphopantetheine moiety from coenzyme A to a Ser of acyl-carrier-protein. In Chlamydia caviae (strain ATCC VR-813 / DSM 19441 / 03DC25 / GPIC) (Chlamydophila caviae), this protein is Holo-[acyl-carrier-protein] synthase.